A 424-amino-acid chain; its full sequence is Enolase (424 aa).

(2R)-2-phosphoglycerate is bound at residue Q164. E206 (proton donor) is an active-site residue. The Mg(2+) site is built by D243, E284, and D311. (2R)-2-phosphoglycerate contacts are provided by K336, R365, S366, and K387. The active-site Proton acceptor is K336.

Belongs to the enolase family. Requires Mg(2+) as cofactor.

It is found in the cytoplasm. It localises to the secreted. The protein resides in the cell surface. The enzyme catalyses (2R)-2-phosphoglycerate = phosphoenolpyruvate + H2O. Its pathway is carbohydrate degradation; glycolysis; pyruvate from D-glyceraldehyde 3-phosphate: step 4/5. In terms of biological role, catalyzes the reversible conversion of 2-phosphoglycerate (2-PG) into phosphoenolpyruvate (PEP). It is essential for the degradation of carbohydrates via glycolysis. The chain is Enolase from Wolbachia sp. subsp. Drosophila simulans (strain wRi).